A 357-amino-acid chain; its full sequence is MFSCKQHLSLGACVFCLGLLASTPFIWCFVFANLLSLEIFSPWQTHVYRLGFPTACLMAVLWTLVPAKHAVRAVTPAIMLNIASALIFFSLRVYSTSTWVSAPCLFLANLPLLCLWPRLAIEIVYICPAIHQRFFELGLLLACTIFALSVVSRALEVSAVFMSPFFIFLALGSGSLAGARRNQIYTSGLERRRSIFCARGDHSVASLKETLHKCPWDLLAISALTVLVVCVMIVLHVHAEVFFGLSRYLPLFLCGAMASGGLYLGHSSIIACVMATLCTLTSVVVYFLHETLGPLGKTVLFISIFVYYFSGVAALSAAMRYKLKKFVNGPLVHLRVVYMCCFVFTFCEYLLVTFIKS.

Topologically, residues 1–11 (MFSCKQHLSLG) are virion surface. Residues 12 to 32 (ACVFCLGLLASTPFIWCFVFA) are membrane-embedded. Topologically, residues 33–46 (NLLSLEIFSPWQTH) are virion surface. Over 47–67 (VYRLGFPTACLMAVLWTLVPA) the chain traverses the membrane. The Virion surface segment spans residues 68-70 (KHA). The hydrophobic stretch at 71–91 (VRAVTPAIMLNIASALIFFSL) threads the membrane. Topologically, residues 92-98 (RVYSTST) are virion surface. Positions 99–121 (WVSAPCLFLANLPLLCLWPRLAI) form a transmembrane segment. Residues 122–133 (EIVYICPAIHQR) are Virion surface-facing. Positions 134 to 154 (FFELGLLLACTIFALSVVSRA) form a transmembrane segment. The Virion surface portion of the chain corresponds to 155 to 158 (LEVS). A transmembrane span lies at residues 159–179 (AVFMSPFFIFLALGSGSLAGA). Residues 180–217 (RRNQIYTSGLERRRSIFCARGDHSVASLKETLHKCPWD) are Virion surface-facing. An Integrin binding site motif is present at residues 199 to 201 (RGD). At 218–238 (LLAISALTVLVVCVMIVLHVH) the chain is embedded in the membrane. At 239-240 (AE) the chain is on the virion surface side. Residues 241-261 (VFFGLSRYLPLFLCGAMASGG) are membrane-embedded. Over 262-267 (LYLGHS) the chain is Virion surface. Residues 268–288 (SIIACVMATLCTLTSVVVYFL) are membrane-embedded. Over 289–298 (HETLGPLGKT) the chain is Virion surface. The chain crosses the lipid bilayer at residues 299–319 (VLFISIFVYYFSGVAALSAAM). The Virion surface portion of the chain corresponds to 320 to 335 (RYKLKKFVNGPLVHLR). The segment at 336–356 (VVYMCCFVFTFCEYLLVTFIK) is a transmembrane helix. A topological domain (virion surface) is located at residue S357.

The protein belongs to the herpesviridae BMRF2 family. Interacts with BDLF2. Interacts with host beta1 integrin family. Extensively glycosylated by O-linked oligosaccharides.

The protein localises to the virion membrane. It is found in the host cell membrane. Facilitates virus attachment to oral epithelial cells by binding to host beta1 integrin family. Participates in rearrangement of cellular actin to increase intercellular contacts by binding BDLF2 and thereby promote virus cell-to-cell spreading. This is Protein BMRF2 from Homo sapiens (Human).